A 308-amino-acid chain; its full sequence is D-alanine--D-alanine ligase (308 aa).

Positions 105 to 302 (KAIFRSLGLA…FPDLCERILD (198 aa)) constitute an ATP-grasp domain. 133–188 (DLPFGLPCVVKPAGEGSSVGVHLVNEAAELGPACRDAASHAGDVIVERYVKGTEVD) contacts ATP. Mg(2+)-binding residues include D256, E269, and N271.

This sequence belongs to the D-alanine--D-alanine ligase family. Requires Mg(2+) as cofactor. Mn(2+) serves as cofactor.

The protein localises to the cytoplasm. The catalysed reaction is 2 D-alanine + ATP = D-alanyl-D-alanine + ADP + phosphate + H(+). Its pathway is cell wall biogenesis; peptidoglycan biosynthesis. In terms of biological role, cell wall formation. The polypeptide is D-alanine--D-alanine ligase (Anaeromyxobacter dehalogenans (strain 2CP-1 / ATCC BAA-258)).